We begin with the raw amino-acid sequence, 23 residues long: Mu-conotoxin-like SxIIIB (23 aa).

Gln1 is subject to Pyrrolidone carboxylic acid. Disulfide bonds link Cys3–Cys16, Cys4–Cys21, and Cys11–Cys22. Ala23 bears the Alanine amide mark.

It belongs to the conotoxin M superfamily. In terms of tissue distribution, expressed by the venom duct.

It localises to the secreted. Functionally, mu-conotoxins block voltage-gated sodium channels (Nav). The sequence is that of Mu-conotoxin-like SxIIIB from Conus striolatus (Cone snail).